Here is a 185-residue protein sequence, read N- to C-terminus: ATP-dependent protease subunit HslV (185 aa).

T2 is a catalytic residue. Na(+) contacts are provided by G157, C160, and T163.

The protein belongs to the peptidase T1B family. HslV subfamily. As to quaternary structure, a double ring-shaped homohexamer of HslV is capped on each side by a ring-shaped HslU homohexamer. The assembly of the HslU/HslV complex is dependent on binding of ATP.

Its subcellular location is the cytoplasm. It carries out the reaction ATP-dependent cleavage of peptide bonds with broad specificity.. Allosterically activated by HslU binding. In terms of biological role, protease subunit of a proteasome-like degradation complex believed to be a general protein degrading machinery. The sequence is that of ATP-dependent protease subunit HslV from Idiomarina loihiensis (strain ATCC BAA-735 / DSM 15497 / L2-TR).